Consider the following 845-residue polypeptide: Protein SEY1 (845 aa).

Positions 1–29 (MELNVDSAKQLLAEHEQELQSAHDAHSIL) form a coiled coil. Over 1-749 (MELNVDSAKQ…KRATVSSIAQ (749 aa)) the chain is Cytoplasmic. The GB1/RHD3-type G domain occupies 112-334 (GFGYDLCAVL…DPNFVFKTEY (223 aa)). 122–129 (GSQSTGKS) is a GTP binding site. Residues 750–770 (VPLWMYGVMLVLGWNELMAIL) traverse the membrane as a helical segment. Residues 771–773 (SSP) lie on the Lumenal side of the membrane. The helical transmembrane segment at 774 to 794 (VYFAFLLVLIASAYIVWRLNL) threads the bilayer. At 795 to 845 (SGPLISVLRAVANEVHRLADAQLRTHFSQPLREPRPPAESRPAEQIELEPN) the chain is on the cytoplasmic side. Positions 823–845 (QPLREPRPPAESRPAEQIELEPN) are disordered. The span at 826-838 (REPRPPAESRPAE) shows a compositional bias: basic and acidic residues.

The protein belongs to the TRAFAC class dynamin-like GTPase superfamily. GB1/RHD3 GTPase family. RHD3 subfamily.

The protein resides in the endoplasmic reticulum membrane. Its function is as follows. Cooperates with the reticulon proteins and tubule-shaping DP1 family proteins to generate and maintain the structure of the tubular endoplasmic reticulum network. Has GTPase activity, which is required for its function in ER organization. This is Protein SEY1 from Mycosarcoma maydis (Corn smut fungus).